The primary structure comprises 342 residues: N-acetyl-gamma-glutamyl-phosphate reductase (342 aa).

The active site involves C146.

It belongs to the NAGSA dehydrogenase family. Type 1 subfamily.

The protein localises to the cytoplasm. The catalysed reaction is N-acetyl-L-glutamate 5-semialdehyde + phosphate + NADP(+) = N-acetyl-L-glutamyl 5-phosphate + NADPH + H(+). It participates in amino-acid biosynthesis; L-arginine biosynthesis; N(2)-acetyl-L-ornithine from L-glutamate: step 3/4. In terms of biological role, catalyzes the NADPH-dependent reduction of N-acetyl-5-glutamyl phosphate to yield N-acetyl-L-glutamate 5-semialdehyde. This Thermobifida fusca (strain YX) protein is N-acetyl-gamma-glutamyl-phosphate reductase.